The sequence spans 215 residues: UPF0502 protein YceH (215 aa).

This sequence belongs to the UPF0502 family.

The sequence is that of UPF0502 protein YceH from Salmonella paratyphi A (strain ATCC 9150 / SARB42).